The following is a 223-amino-acid chain: uncharacterized protein (223 aa).

Helical transmembrane passes span 1–21 and 45–65; these read MLII…TFYL and ILIG…TSLI.

The protein resides in the cell membrane. This is an uncharacterized protein from Haemophilus influenzae (strain ATCC 51907 / DSM 11121 / KW20 / Rd).